Here is a 471-residue protein sequence, read N- to C-terminus: P2X purinoceptor 2 (471 aa).

The Cytoplasmic portion of the chain corresponds to 1-42 (MAAAQPKYPAGATARRLARGCWSALWDYETPKVIVVRNRRLG). Intrachain disulfides connect Cys-21/Cys-439, Cys-125/Cys-176, Cys-136/Cys-159, Cys-142/Cys-170, Cys-226/Cys-236, and Cys-270/Cys-279. Residues 43–63 (VLYRAVQLLILLYFVWYVFIV) traverse the membrane as a helical segment. Over 64–337 (QKSYQESETG…IVHGQAGKFS (274 aa)) the chain is Extracellular. ATP-binding residues include Lys-81 and Lys-83. Residue Asn-133 is glycosylated (N-linked (GlcNAc...) asparagine). The N-linked (GlcNAc...) asparagine glycan is linked to Asn-194. Position 196 (Thr-196) interacts with ATP. ATP-binding residues include Ser-296, Asn-300, and Arg-302. N-linked (GlcNAc...) asparagine glycosylation occurs at Asn-310. Residue Lys-319 coordinates ATP. The interval 320-333 (AYGIRIDVIVHGQA) is pore-forming motif. A helical transmembrane segment spans residues 338 to 358 (LIPTIINLATALTSVGVGSFL). Over 359–471 (CDWILLTFMN…PTDPKGLAQL (113 aa)) the chain is Cytoplasmic. The tract at residues 400 to 471 (GQAPPEPGHR…PTDPKGLAQL (72 aa)) is disordered.

This sequence belongs to the P2X receptor family. In terms of assembly, homotrimer and heterotrimer; functional P2XRs are organized as homomeric and heteromeric trimers. Homotrimer. Forms heterotrimer with P2RX1. Forms heterotrimer with P2RX6. Forms heterotrimer with P2RX3. In terms of tissue distribution, expressed in both the central and peripheral nervous system, as well as in the pituitary gland.

The protein resides in the cell membrane. The enzyme catalyses Ca(2+)(in) = Ca(2+)(out). It carries out the reaction K(+)(in) = K(+)(out). It catalyses the reaction Na(+)(in) = Na(+)(out). With respect to regulation, fast activation by external ATP. Exhibits slow desensitization during prolonged ATP activation. Not sensitive to the ATP agonist:alpha/beta-methylene-ATP. In terms of biological role, ATP-gated nonselective transmembrane cation channel permeable to potassium, sodium and calcium. Activation by extracellular ATP induces a variety of cellular responses, such as excitatory postsynaptic responses in sensory neurons, neuromuscular junctions (NMJ) formation, hearing, perception of taste and peristalsis. In the inner ear, regulates sound transduction and auditory neurotransmission, outer hair cell electromotility, inner ear gap junctions, and K(+) recycling. Mediates synaptic transmission between neurons and from neurons to smooth muscle. The sequence is that of P2X purinoceptor 2 from Homo sapiens (Human).